The primary structure comprises 107 residues: Large ribosomal subunit protein uL24 (107 aa).

It belongs to the universal ribosomal protein uL24 family. Part of the 50S ribosomal subunit.

Its function is as follows. One of two assembly initiator proteins, it binds directly to the 5'-end of the 23S rRNA, where it nucleates assembly of the 50S subunit. One of the proteins that surrounds the polypeptide exit tunnel on the outside of the subunit. This chain is Large ribosomal subunit protein uL24, found in Kosmotoga olearia (strain ATCC BAA-1733 / DSM 21960 / TBF 19.5.1).